Consider the following 166-residue polypeptide: Chorion protein S18 (166 aa).

The first 17 residues, 1 to 17 (MMKFMCLFVCAIAAVSA), serve as a signal peptide directing secretion.

Belongs to the chorion protein S15/S18 family.

It localises to the secreted. Its function is as follows. Chorion membrane (egg shell) protein; plays a role in protecting the egg from the environment. This Drosophila grimshawi (Hawaiian fruit fly) protein is Chorion protein S18 (Cp18).